The chain runs to 86 residues: Large ribosomal subunit protein bL27 (86 aa).

Residues 1 to 24 form a disordered region; that stretch reads MAHKKGTGSTRNGRDSNSKRLGVK.

Belongs to the bacterial ribosomal protein bL27 family.

In Prochlorococcus marinus (strain AS9601), this protein is Large ribosomal subunit protein bL27.